The chain runs to 396 residues: 1-deoxy-D-xylulose 5-phosphate reductoisomerase (396 aa).

NADPH is bound by residues Thr-10, Gly-11, Ser-12, Ile-13, Gly-36, Lys-37, Asn-38, and Asn-124. Lys-125 contacts 1-deoxy-D-xylulose 5-phosphate. Glu-126 contributes to the NADPH binding site. Mn(2+) is bound at residue Asp-150. Residues Ser-151, Glu-152, Ser-186, and His-209 each contribute to the 1-deoxy-D-xylulose 5-phosphate site. Mn(2+) is bound at residue Glu-152. Residue Gly-215 coordinates NADPH. The 1-deoxy-D-xylulose 5-phosphate site is built by Ser-222, Asn-227, Lys-228, and Glu-231. Glu-231 is a Mn(2+) binding site.

It belongs to the DXR family. Requires Mg(2+) as cofactor. The cofactor is Mn(2+).

The enzyme catalyses 2-C-methyl-D-erythritol 4-phosphate + NADP(+) = 1-deoxy-D-xylulose 5-phosphate + NADPH + H(+). The protein operates within isoprenoid biosynthesis; isopentenyl diphosphate biosynthesis via DXP pathway; isopentenyl diphosphate from 1-deoxy-D-xylulose 5-phosphate: step 1/6. Functionally, catalyzes the NADPH-dependent rearrangement and reduction of 1-deoxy-D-xylulose-5-phosphate (DXP) to 2-C-methyl-D-erythritol 4-phosphate (MEP). The polypeptide is 1-deoxy-D-xylulose 5-phosphate reductoisomerase (Haemophilus ducreyi (strain 35000HP / ATCC 700724)).